Reading from the N-terminus, the 221-residue chain is NAD(P)H-hydrate epimerase (221 aa).

Residues 10-211 (MQQYDQYTIN…DIGIYSPAEL (202 aa)) enclose the YjeF N-terminal domain. 58–62 (NNGGD) serves as a coordination point for (6S)-NADPHX. K(+)-binding residues include asparagine 59 and aspartate 121. (6S)-NADPHX contacts are provided by residues 125–131 (GIGLSKP) and aspartate 154. Serine 157 contributes to the K(+) binding site.

Belongs to the NnrE/AIBP family. The cofactor is K(+).

The catalysed reaction is (6R)-NADHX = (6S)-NADHX. It carries out the reaction (6R)-NADPHX = (6S)-NADPHX. Its function is as follows. Catalyzes the epimerization of the S- and R-forms of NAD(P)HX, a damaged form of NAD(P)H that is a result of enzymatic or heat-dependent hydration. This is a prerequisite for the S-specific NAD(P)H-hydrate dehydratase to allow the repair of both epimers of NAD(P)HX. This is NAD(P)H-hydrate epimerase from Weissella koreensis (strain KACC 15510).